Reading from the N-terminus, the 434-residue chain is Mitochondrial distribution and morphology protein 12 (434 aa).

Residues 1-434 form the SMP-LTD domain; that stretch reads MSIDIDWERA…VYPSFWTFLV (434 aa). The span at 70–83 shows a compositional bias: acidic residues; it reads YEEDDNENFSESSE. Disordered stretches follow at residues 70-141 and 181-277; these read YEED…LRSP and TPLG…LPPR. The span at 86–97 shows a compositional bias: basic and acidic residues; sequence SPTREPVDRYGS. Residues 215–237 show a composition bias toward polar residues; sequence SAQSRPSTANTGNTLLSRGSMSS.

This sequence belongs to the MDM12 family. In terms of assembly, component of the ER-mitochondria encounter structure (ERMES) or MDM complex, composed of MMM1, MDM10, MDM12 and MDM34. An MMM1 homodimer associates with one molecule of MDM12 on each side in a pairwise head-to-tail manner, and the SMP-LTD domains of MMM1 and MDM12 generate a continuous hydrophobic tunnel for phospholipid trafficking.

The protein localises to the mitochondrion outer membrane. The protein resides in the endoplasmic reticulum membrane. Functionally, component of the ERMES/MDM complex, which serves as a molecular tether to connect the endoplasmic reticulum (ER) and mitochondria. Components of this complex are involved in the control of mitochondrial shape and protein biogenesis, and function in nonvesicular lipid trafficking between the ER and mitochondria. MDM12 is required for the interaction of the ER-resident membrane protein MMM1 and the outer mitochondrial membrane-resident beta-barrel protein MDM10. The MDM12-MMM1 subcomplex functions in the major beta-barrel assembly pathway that is responsible for biogenesis of all mitochondrial outer membrane beta-barrel proteins, and acts in a late step after the SAM complex. The MDM10-MDM12-MMM1 subcomplex further acts in the TOM40-specific pathway after the action of the MDM12-MMM1 complex. Essential for establishing and maintaining the structure of mitochondria and maintenance of mtDNA nucleoids. The chain is Mitochondrial distribution and morphology protein 12 from Ajellomyces dermatitidis (strain ER-3 / ATCC MYA-2586) (Blastomyces dermatitidis).